The primary structure comprises 606 residues: MPLRLSSLFLRTLREDPVDADVDSHKLLVRAGYIRRAAPGIYTWLPLGLAVLRRVEGIVREEMDAIGAQEVHFPALLPREPYEASNRWTEYGENLFRLQDRKGADYLLAPTHEEMFTLLVKDMYSSYKDLPVMLYQIQTKYRDEARPRAGLLRGREFIMKDSYSFDVDDAGLDDAYAKHRAAYVRIFERLGLPVVAVSATSGAMGGSRSEEFMHPSVVGEDTFVRSAGGYAANVEAVTTVVPEPVDCTDAPAAQVHRTPDSPTIDTLVSRSNELHPREGQPWTAADTLKNVLLSVSLPEGGTQLVAVGVPGDREIDLKRVEAGIGGALGIGGELEVEAASEEQLRAVPELVKGYIGPGLSREDALLGTESPTGIPYFVDPRVVPGTRWITGANVAEAHVYDLVAERDFTWDATLEACTVREGDPAPDGSGPLEIARGMEMGHVFQLGRKYAEALGLKVLDNNGKLVTVTMGSYGIGVTRALAAVAEFYHDEHGLLWPRNLSPADVHVVATGKGPEVLEAAEEIVAHLEAAGVSVLFDDRPKVSPGVKFRDAELLGVPTVLVVGRGLADGVLELKDRRSGTSRDIARDRVVAEITAELQGQEGPAAE.

Belongs to the class-II aminoacyl-tRNA synthetase family. ProS type 1 subfamily. In terms of assembly, homodimer.

The protein localises to the cytoplasm. The enzyme catalyses tRNA(Pro) + L-proline + ATP = L-prolyl-tRNA(Pro) + AMP + diphosphate. Catalyzes the attachment of proline to tRNA(Pro) in a two-step reaction: proline is first activated by ATP to form Pro-AMP and then transferred to the acceptor end of tRNA(Pro). As ProRS can inadvertently accommodate and process non-cognate amino acids such as alanine and cysteine, to avoid such errors it has two additional distinct editing activities against alanine. One activity is designated as 'pretransfer' editing and involves the tRNA(Pro)-independent hydrolysis of activated Ala-AMP. The other activity is designated 'posttransfer' editing and involves deacylation of mischarged Ala-tRNA(Pro). The misacylated Cys-tRNA(Pro) is not edited by ProRS. This is Proline--tRNA ligase from Kocuria rhizophila (strain ATCC 9341 / DSM 348 / NBRC 103217 / DC2201).